The primary structure comprises 356 residues: DNA polymerase IV (356 aa).

Residues 6-186 (IVHIDMDAFY…LPVDAFHGIG (181 aa)) enclose the UmuC domain. Residues Asp10 and Asp104 each contribute to the Mg(2+) site. The active site involves Glu105.

This sequence belongs to the DNA polymerase type-Y family. In terms of assembly, monomer. Mg(2+) serves as cofactor.

It is found in the cytoplasm. The catalysed reaction is DNA(n) + a 2'-deoxyribonucleoside 5'-triphosphate = DNA(n+1) + diphosphate. Poorly processive, error-prone DNA polymerase involved in untargeted mutagenesis. Copies undamaged DNA at stalled replication forks, which arise in vivo from mismatched or misaligned primer ends. These misaligned primers can be extended by PolIV. Exhibits no 3'-5' exonuclease (proofreading) activity. May be involved in translesional synthesis, in conjunction with the beta clamp from PolIII. The protein is DNA polymerase IV of Gluconobacter oxydans (strain 621H) (Gluconobacter suboxydans).